Here is a 614-residue protein sequence, read N- to C-terminus: Syringomycin synthase SyrB1 (614 aa).

The 76-residue stretch at 535 to 610 (KGLSEQEHFV…VLADHITRSL (76 aa)) folds into the Carrier domain. O-(pantetheine 4'-phosphoryl)serine is present on Ser570.

Belongs to the ATP-dependent AMP-binding enzyme family. Requires pantetheine 4'-phosphate as cofactor.

It catalyses the reaction holo-[peptidyl-carrier protein] + L-threonine + ATP = L-threonyl-[peptidyl-carrier protein] + AMP + diphosphate. Its function is as follows. Involved in the biosynthesis of syringomycin E, a cyclic lipodepsinonapeptide toxin with phytotoxic activity. Specifically adenylates L-threonine and loads it onto its peptidyl carrier domain, via a thioester linkage to the phosphopanthetheine moiety. Is highly specific for L-threonine. In Pseudomonas syringae pv. syringae, this protein is Syringomycin synthase SyrB1.